A 255-amino-acid chain; its full sequence is MTADIRLFTCLTDNFGVLIHDPATDATAAIDAPEAGPIIEALDREGWTLTDILVTHHHADHIGGIAELKQKYKCRVVAPHDKKAPIANVDLRVGQGDIVKVGTLLGRVLETPGHTLDHISYVFDDEKVVFAADTLFSIGCGRVIEGTYPMMWDSLLKLRALPDDFRLYCGHEYTASNVKFALTVEPNNAALKARAEDVARLRAENKPTVPTLMGEEKKANVFLRADDPAVAAGVHMKGASGADVFGELRERKNKS.

Residues His56, His58, Asp60, His61, His114, Asp133, and His171 each contribute to the Zn(2+) site.

The protein belongs to the metallo-beta-lactamase superfamily. Glyoxalase II family. Monomer. Zn(2+) is required as a cofactor.

The enzyme catalyses an S-(2-hydroxyacyl)glutathione + H2O = a 2-hydroxy carboxylate + glutathione + H(+). The protein operates within secondary metabolite metabolism; methylglyoxal degradation; (R)-lactate from methylglyoxal: step 2/2. Functionally, thiolesterase that catalyzes the hydrolysis of S-D-lactoyl-glutathione to form glutathione and D-lactic acid. This is Hydroxyacylglutathione hydrolase from Nitrobacter hamburgensis (strain DSM 10229 / NCIMB 13809 / X14).